Here is a 135-residue protein sequence, read N- to C-terminus: Ribonuclease P protein component (135 aa).

It belongs to the RnpA family. Consists of a catalytic RNA component (M1 or rnpB) and a protein subunit.

The enzyme catalyses Endonucleolytic cleavage of RNA, removing 5'-extranucleotides from tRNA precursor.. In terms of biological role, RNaseP catalyzes the removal of the 5'-leader sequence from pre-tRNA to produce the mature 5'-terminus. It can also cleave other RNA substrates such as 4.5S RNA. The protein component plays an auxiliary but essential role in vivo by binding to the 5'-leader sequence and broadening the substrate specificity of the ribozyme. The protein is Ribonuclease P protein component of Saccharophagus degradans (strain 2-40 / ATCC 43961 / DSM 17024).